The sequence spans 99 residues: Large ribosomal subunit protein uL23 (99 aa).

This sequence belongs to the universal ribosomal protein uL23 family. As to quaternary structure, part of the 50S ribosomal subunit. Contacts protein L29, and trigger factor when it is bound to the ribosome.

Its function is as follows. One of the early assembly proteins it binds 23S rRNA. One of the proteins that surrounds the polypeptide exit tunnel on the outside of the ribosome. Forms the main docking site for trigger factor binding to the ribosome. The protein is Large ribosomal subunit protein uL23 of Shewanella sediminis (strain HAW-EB3).